The following is a 158-amino-acid chain: C-type lectin galactose-binding isoform (158 aa).

The N-terminal stretch at 1 to 23 is a signal peptide; the sequence is MGRFLLVTLSLLVVAFSLNGANS. Intrachain disulfides connect Cys-26-Cys-37, Cys-54-Cys-154, and Cys-129-Cys-146. One can recognise a C-type lectin domain in the interval 33–155; that stretch reads RNGFCYKVFN…CTALRPFLCQ (123 aa). The Ca(2+) site is built by Gln-119, Asp-121, and Glu-127. The Galactose-binding signature appears at 119–121; sequence QPD. The N-linked (GlcNAc...) asparagine glycan is linked to Asn-134. Residues Asn-142 and Asp-143 each contribute to the Ca(2+) site.

The protein belongs to the true venom lectin family. In terms of assembly, homodimer; disulfide-linked. As to expression, expressed by the venom gland.

The protein localises to the secreted. Its function is as follows. Galactose-binding lectin that binds to and agglutinates erythrocytes in a calcium-dependent manner. The chain is C-type lectin galactose-binding isoform from Pseudechis porphyriacus (Red-bellied black snake).